A 217-amino-acid chain; its full sequence is MDATLSTRRHSHLDSLLIETQRVFEVVFGHPVAQRPSPANAFPNLLLSPKDRRHAAGLMRINHVGEICAQGLYFGQVLVARKQELRRHLLKAAQEETDHLSWCSDRLYELESRPSLFNPFWYSGSYILGVFAGLLGDPWSLGFVVETERQVEAHLEKHLQVLPESDARSREILRVMKVEEARHADQADHAGARLLPSPITGAMAWAARLMKVVAYRI.

Fe cation is bound by residues Glu-66, Glu-96, His-99, Glu-148, Glu-180, and His-183.

The protein belongs to the COQ7 family. Fe cation serves as cofactor.

The protein localises to the cell membrane. It carries out the reaction a 5-methoxy-2-methyl-3-(all-trans-polyprenyl)benzene-1,4-diol + AH2 + O2 = a 3-demethylubiquinol + A + H2O. It participates in cofactor biosynthesis; ubiquinone biosynthesis. Functionally, catalyzes the hydroxylation of 2-nonaprenyl-3-methyl-6-methoxy-1,4-benzoquinol during ubiquinone biosynthesis. The polypeptide is 3-demethoxyubiquinol 3-hydroxylase (Xylella fastidiosa (strain Temecula1 / ATCC 700964)).